A 686-amino-acid chain; its full sequence is MRNWEDPFTLACNTALKKNLPSCIFIIIFISVLCPVAMSQVVVPDSDADCLLRFKDTLANGSEFRSWDPLSSPCQGNTANWFGVLCSNYVWGLQLEGMGLTGKLNLDPLVPMKNLRTISFMNNNFNGPMPQVKRFTSLKSLYLSNNRFSGEIPADAFLGMPLLKKILLANNAFRGTIPSSLASLPMLLELRLNGNQFQGQIPSFQQKDLKLASFENNDLDGPIPESLRNMDPGSFAGNKGLCDAPLSPCSSSSPGVPVVPVSPVDPKSTSPPTGKKAGSFYTLAIILIVIGIILVIIALVFCFVQSRRRNFLSAYPSSAGKERIESYNYHQSTNKNNKPAESVNHTRRGSMPDPGGRLLFVRDDIQRFDLQDLLRASAEVLGSGTFGASYKAAISSGQTLVVKRYKHMNNVGRDEFHEHMRRLGRLNHPNILPLVAYYYRREEKLLVTEFMPNSSLASHLHANNSAGLDWITRLKIIKGVAKGLSYLFDELPTLTIPHGHMKSSNIVLDDSFEPLLTDYALRPMMSSEHAHNFMTAYKSPEYRPSKGQIITKKTDVWCFGVLILEVLTGRFPENYLTQGYDSNMSLVTWVNDMVKEKKTGDVFDKEMKGKKNCKAEMINLLKIGLRCCEEEEERRMDMREVVEMVEMLREGESEDDFGSMDHRGTHNNVYSSMLLDDDDFGFSMNR.

The signal sequence occupies residues 1-39 (MRNWEDPFTLACNTALKKNLPSCIFIIIFISVLCPVAMS). Residues 40–283 (QVVVPDSDAD…GKKAGSFYTL (244 aa)) are Extracellular-facing. N60 carries an N-linked (GlcNAc...) asparagine glycan. LRR repeat units follow at residues 112-135 (MKNL…VKRF), 136-159 (TSLK…AFLG), 161-184 (PLLK…LASL), 185-208 (PMLL…QQKD), and 210-230 (KLAS…LRNM). A helical membrane pass occupies residues 284 to 304 (AIILIVIGIILVIIALVFCFV). The Cytoplasmic segment spans residues 305–686 (QSRRRNFLSA…DDDFGFSMNR (382 aa)). Polar residues predominate over residues 328–339 (NYHQSTNKNNKP). A disordered region spans residues 328 to 355 (NYHQSTNKNNKPAESVNHTRRGSMPDPG). The Protein kinase domain occupies 375–648 (RASAEVLGSG…REVVEMVEML (274 aa)). S377 bears the Phosphoserine mark. Residues 381–389 (LGSGTFGAS) and K403 contribute to the ATP site. 2 positions are modified to phosphoserine: S455 and S458. T472 carries the post-translational modification Phosphothreonine. Position 542 is a phosphotyrosine (Y542). The residue at position 545 (S545) is a Phosphoserine.

This sequence belongs to the protein kinase superfamily. Ser/Thr protein kinase family. In terms of assembly, interacts with the GRI peptide. Expressed in pollen and/or in flowers. Detected at low levels in leaves.

Its subcellular location is the cell membrane. The enzyme catalyses L-seryl-[protein] + ATP = O-phospho-L-seryl-[protein] + ADP + H(+). It carries out the reaction L-threonyl-[protein] + ATP = O-phospho-L-threonyl-[protein] + ADP + H(+). Its function is as follows. Receptor-like kinase involved in the control of pollen germination and pollen tube polar growth. The extracellular domain serves as a sensor for peptides derived from GRI. May act as a downstream element for ROS-dependent cell death induced by GRI. This chain is Pollen receptor-like kinase 5, found in Arabidopsis thaliana (Mouse-ear cress).